A 537-amino-acid polypeptide reads, in one-letter code: Zinc metalloproteinase nas-23 (537 aa).

A signal peptide spans 1-16; that stretch reads MRFLILVLAGSIGIYG. A propeptide spanning residues 17 to 111 is cleaved from the precursor; that stretch reads VNLPKIPKLS…EQLDHSRTKR (95 aa). N-linked (GlcNAc...) asparagine glycosylation is present at Asn-77. The region spanning 116 to 311 is the Peptidase M12A domain; sequence NAMYPKTIWL…AKINRHYNCE (196 aa). Cystine bridges form between Cys-156-Cys-310, Cys-178-Cys-199, Cys-314-Cys-334, Cys-336-Cys-345, Cys-356-Cys-385, and Cys-412-Cys-433. Residue His-207 coordinates Zn(2+). The active site involves Glu-208. The Zn(2+) site is built by His-211 and His-217. The EGF-like domain maps to 306–346; it reads RHYNCEKNCKNKITCLNGGYQHPKNCKICVCPPGYGGSDCK. In terms of domain architecture, CUB spans 356 to 471; it reads CTGVLVAGET…VQLRYSTVDG (116 aa). An N-linked (GlcNAc...) asparagine glycan is attached at Asn-481.

Zn(2+) is required as a cofactor. As to expression, expressed in the hypodermis, rectum and to a lesser extent in pharyngeal muscles and intestine.

It localises to the secreted. Metalloprotease. This is Zinc metalloproteinase nas-23 (nas-23) from Caenorhabditis elegans.